We begin with the raw amino-acid sequence, 366 residues long: Aminomethyltransferase (366 aa).

It belongs to the GcvT family. In terms of assembly, the glycine cleavage system is composed of four proteins: P, T, L and H.

The catalysed reaction is N(6)-[(R)-S(8)-aminomethyldihydrolipoyl]-L-lysyl-[protein] + (6S)-5,6,7,8-tetrahydrofolate = N(6)-[(R)-dihydrolipoyl]-L-lysyl-[protein] + (6R)-5,10-methylene-5,6,7,8-tetrahydrofolate + NH4(+). Functionally, the glycine cleavage system catalyzes the degradation of glycine. The polypeptide is Aminomethyltransferase (Neisseria meningitidis serogroup A / serotype 4A (strain DSM 15465 / Z2491)).